Consider the following 157-residue polypeptide: Putative dehydration-responsive element-binding protein 2H (157 aa).

A Nuclear localization signal motif is present at residues 5–21 (RKSRGTRDVAEILRKWR). Residues 29–57 (ADSCIDGGGSKPIRKAPPKRSRKGCMKGK) form a disordered region. Residues 40–54 (PIRKAPPKRSRKGCM) are compositionally biased toward basic residues. Residues 66–123 (DYTGVRQRTWGKWVAEIREPGRGAKLWLGTFSSSYEAALAYDEASKAIYGQSARLNLP) constitute a DNA-binding region (AP2/ERF).

The protein belongs to the AP2/ERF transcription factor family. ERF subfamily.

Its subcellular location is the nucleus. Its function is as follows. Putative transcriptional activator that binds specifically to the DNA sequence 5'-[AG]CCGAC-3'. This Arabidopsis thaliana (Mouse-ear cress) protein is Putative dehydration-responsive element-binding protein 2H (DREB2H).